Reading from the N-terminus, the 386-residue chain is Acyl-CoA ligase lcsD (386 aa).

Positions 62-132 are SBD1; sequence ELEQTLLAIQ…ELLPACKIIQ (71 aa). 107 to 115 lines the ATP pocket; that stretch reads AVGASGISK. Residues 133 to 195 form an SBD2 region; it reads GYGMTETTGV…LRSPSVVIGY (63 aa). Thr137 lines the substrate pocket. ATP contacts are provided by Asp216 and Arg235. CoA contacts are provided by residues 243-245 and 313-316; these read RGL and HLDG. Residue Lys331 participates in ATP binding. The interval 352–386 is disordered; sequence REKAANGVHKVHVNGVKRPEKMEVFDLSSDDEDDD.

Belongs to the ATP-dependent AMP-binding enzyme family.

The protein operates within secondary metabolite biosynthesis. In terms of biological role, acyl-CoA ligase; part of the gene cluster that mediates the biosynthesis of the lipopeptide antibiotics leucinostatins that show extensive biological activities, including antimalarial, antiviral, antibacterial, antifungal, and antitumor activities, as well as phytotoxic. Leucinostatin A contains nine amino acid residues, including the unusual amino acid 4-methyl-L-proline (MePro), 2-amino-6-hydroxy-4-methyl-8-oxodecanoic acid (AHyMeOA), 3-hydroxyleucine (HyLeu), alpha-aminoisobutyric acid (AIB), beta-Ala, a 4-methylhex-2-enoic acid at the N-terminus as well as a N1,N1-dimethylpropane-1,2-diamine (DPD) at the C-terminus. The biosynthesis of leucinostatins is probably initiated with the assembly of 4-methylhex-2-enoic acid by a reducing PKS. Two reducing polyketide synthases, lcsB and lcsC, have been identified in the cluster and it is not clear which is the one that assembles 4-methylhex-2-enoic acid since both contain KS, AT, DH, cMT, ER, KR and ACP domains. The polyketide residue might be transferred to the NRPS lcsA, mediated by two additional enzymes, the acyl-CoA ligase lcsD and the thioesterase lcsE. The linear polyketide carboxylic acid, which is released from PKS, is converted to a CoA thioester by lcsD, and then lcsE hydrolyzes the thiol bond and shuttles the polyketide intermediate to lcsA. The C domain of the first module catalyzed the condensation of 4-methylhex-2-enoic acid and MePro carried by domain A1, followed by successive condensations of nine amino acids to trigger the elongation of the linear peptide. A5 and A6 domains of lcsA are proposed to incorporate leucine, A2 AHyMeOA, and A3 incorporates HyLeu. A4, A7 and A8 incorporate AIB. The AHyMeOA in leucinostatin A activated by the A2 might be produced by the second PKS (lcsB or lcsC) present within the cluster. The MePro is probably produced via leucine cyclization and may originate from a separate pathway, independent of the cluster. Another nonproteinogenic amino acid, beta-Ala, could be produced by an aspartic acid decarboxylase also localized outside of the cluster. Two candidates are VFPBJ_01400 and VFPBJ_10476. The final peptide scaffold may be released by the NAD(P)H-dependent thioester reductase (TE) at the C-terminal region of lcsA. Transamination of the lcsA product by the transaminase lcsP may produce DPD at the C-terminus. Further hydroxylation steps performed alternatively by the cytochrome P450 monooxygenases lcsI, lcsK and lcsN then yield the non-methylated leucinostatins precursor. It is also possible that leucines can be hydroxylated prior to their incorporation into the peptide. Varying extents of methylation then lead to the formation of leucinostatins A and B. The protein is Acyl-CoA ligase lcsD of Purpureocillium lilacinum (Paecilomyces lilacinus).